The primary structure comprises 121 residues: Methylglyoxal synthase (121 aa).

The region spanning 1–121 is the MGS-like domain; the sequence is MMKVALIAHD…SAELFLRALN (121 aa). Substrate-binding positions include histidine 9, lysine 13, 35–38, and 55–56; these read TGTT and SG. Aspartate 61 serves as the catalytic Proton donor/acceptor. Histidine 88 lines the substrate pocket.

The protein belongs to the methylglyoxal synthase family.

The enzyme catalyses dihydroxyacetone phosphate = methylglyoxal + phosphate. In terms of biological role, catalyzes the formation of methylglyoxal from dihydroxyacetone phosphate. The protein is Methylglyoxal synthase of Carboxydothermus hydrogenoformans (strain ATCC BAA-161 / DSM 6008 / Z-2901).